The chain runs to 311 residues: Ribonuclease HIII (311 aa).

Residues 95–311 enclose the RNase H type-2 domain; the sequence is MSIVGSDEVG…NTEKAFRLLK (217 aa). The a divalent metal cation site is built by D101, E102, and D206.

Belongs to the RNase HII family. RnhC subfamily. Mn(2+) is required as a cofactor. It depends on Mg(2+) as a cofactor.

It localises to the cytoplasm. The enzyme catalyses Endonucleolytic cleavage to 5'-phosphomonoester.. Endonuclease that specifically degrades the RNA of RNA-DNA hybrids. The sequence is that of Ribonuclease HIII from Bacillus cereus (strain 03BB102).